The chain runs to 138 residues: Protein X (138 aa).

Residues Glu-24 to Ala-48 form a disordered region. The segment at Pro-68–Leu-113 is mitochondrial targeting sequence.

Belongs to the orthohepadnavirus protein X family. May form homodimer. May interact with host CEBPA, CFLAR, CREB1, DDB1, E4F1, HBXIP, HSPD1/HSP60, NFKBIA, POLR2E and SMAD4. Interacts with host SMC5-SMC6 complex and induces its degradation. Interacts with host TRPC4AP; leading to prevent ubiquitination of TRPC4AP. Interacts with host PLSCR1; this interaction promotes ubiquitination and degradation of HBx and impairs HBx-mediated cell proliferation. In terms of processing, a fraction may be phosphorylated in insect cells and HepG2 cells, a human hepatoblastoma cell line. Phosphorylated in vitro by host protein kinase C or mitogen-activated protein kinase. N-acetylated in insect cells.

It is found in the host cytoplasm. It localises to the host nucleus. Its subcellular location is the host mitochondrion. Functionally, multifunctional protein that plays a role in silencing host antiviral defenses and promoting viral transcription. Does not seem to be essential for HBV infection. May be directly involved in development of cirrhosis and liver cancer (hepatocellular carcinoma). Most of cytosolic activities involve modulation of cytosolic calcium. The effect on apoptosis is controversial depending on the cell types in which the studies have been conducted. May induce apoptosis by localizing in mitochondria and causing loss of mitochondrial membrane potential. May also modulate apoptosis by binding host CFLAR, a key regulator of the death-inducing signaling complex (DISC). Promotes viral transcription by using the host E3 ubiquitin ligase DDB1 to target the SMC5-SMC6 complex to proteasomal degradation. This host complex would otherwise bind to viral episomal DNA, and prevents its transcription. Moderately stimulates transcription of many different viral and cellular transcription elements. Promoters and enhancers stimulated by HBx contain DNA binding sites for NF-kappa-B, AP-1, AP-2, c-EBP, ATF/CREB, or the calcium-activated factor NF-AT. The chain is Protein X from Arctic squirrel hepatitis virus (ASHV).